The sequence spans 762 residues: Chondroadherin-like protein (762 aa).

The N-terminal stretch at 1 to 30 is a signal peptide; that stretch reads MEGPRSSTHVPLVLPLLVLLLLAPARQAAA. The 32-residue stretch at 31–62 folds into the LRRNT 1 domain; the sequence is QRCPQACICDNSRRHVACRYQNLTEVPDAIPE. Residue N52 is glycosylated (N-linked (GlcNAc...) asparagine). 9 LRR repeats span residues 87–108, 111–132, 135–156, 159–180, 183–204, 207–228, 231–252, 255–276, and 279–300; these read HLTHLDLRHCEVELVAEGAFRG, RLLLLNLASNHLRELPQEALDG, SLRRLELEGNALEELRPGTFGA, ALATLNLAHNALVYLPAMAFQG, RVRWLRLSHNALSVLAPEALAG, ALRRLSLHHNELQALPGPVLSQ, GLARLELGHNPLTYAGEEDGLA, GLRELLLDGGALQALGPRAFAH, and RLHTLDLRGNQLDTLPPLQGPG. An LRRCT 1 domain is found at 310–359; it reads NPLWCGCQARPLLEWLARARVRSDGACQGPRRLRGEALDALRPWDLRCPG. The disordered stretch occupies residues 364–390; sequence EEEELEERAVAGPRAPPRGPPRGPGEE. A compositionally biased stretch (pro residues) spans 377–386; it reads RAPPRGPPRG. The LRRNT 2 domain occupies 387–425; it reads PGEERAVAPCPRACVCVPESRHSSCEGCGLQAVPRGFPS. C396 and C411 form a disulfide bridge. LRR repeat units lie at residues 426 to 447, 450 to 471, 474 to 495, 498 to 519, 522 to 543, 546 to 566, 570 to 591, 594 to 615, 619 to 640, and 644 to 665; these read DTQLLDLRRNHFPSVPRAAFPG, HLVSLHLQHCGIAELEAGALAG, RLIYLYLSDNQLAGLSAAALEG, RLGYLYLERNRFLQVPGAALRA, SLFSLHLQDNAVDRLAPGDLGR, ALRWVYLSGNRITEVSLGALG, ELEKLHLDRNQLREVPTGALEG, ALLELQLSGNPLRALRDGAFQP, SLQHLFLNSSGLEQICPGAFSG, and GLQSLHLQKNQLRALPALPSLS. N626 is a glycosylation site (N-linked (GlcNAc...) asparagine). An LRRCT 2 domain is found at 675 to 724; it reads NPFHCDCQLLPLHRWLTGLNLRVGATCATPPNARGQRVKAAAAVFEDCPG. 2 cysteine pairs are disulfide-bonded: C679–C722 and C681–C701. Residues 728–745 are compositionally biased toward basic residues; that stretch reads RKAKRTPASRPSARRTPI. Residues 728–762 form a disordered region; sequence RKAKRTPASRPSARRTPIKGRQCGADKVGKEKGRL.

The protein belongs to the small leucine-rich proteoglycan (SLRP) family. SLRP class IV subfamily. In terms of assembly, associates with collagen and binds to collagen fibrils.

The protein resides in the secreted. It is found in the extracellular space. The protein localises to the extracellular matrix. Its function is as follows. Potential negative modulator of chondrocyte differentiation. Inhibits collagen fibrillogenesis in vitro. May influence chondrocyte's differentiation by acting on its cellular collagenous microenvironment. The sequence is that of Chondroadherin-like protein (CHADL) from Homo sapiens (Human).